A 331-amino-acid chain; its full sequence is CMRF35-like molecule 9 (331 aa).

Residues 1-18 (MRPLVLLWGCLVLPGYEA) form the signal peptide. Residues 19-120 (LKGPKEISGF…LGRDESFEVT (102 aa)) enclose the Ig-like V-type domain. Residues 19–204 (LKGPKEISGF…KPSVSIPMVR (186 aa)) lie on the Extracellular side of the membrane. Residues C37 and C106 are joined by a disulfide bond. O-linked (GalNAc...) threonine glycosylation occurs at T136. Residue S140 is glycosylated (O-linked (GalNAc...) serine). T143 is a glycosylation site (O-linked (GalNAc...) threonine). S145 carries an O-linked (GalNAc...) serine glycan. T150 and T152 each carry an O-linked (GalNAc...) threonine glycan. The O-linked (GalNAc...) serine glycan is linked to S154. 3 O-linked (GalNAc...) threonine glycosylation sites follow: T164, T181, and T182. An O-linked (GalNAc...) serine glycan is attached at S186. The helical transmembrane segment at 205–225 (MMAPVLILLSLLLAAGLIAFG) threads the bilayer. Topologically, residues 226 to 331 (SHMLRWRKKA…ELAFSEFISV (106 aa)) are cytoplasmic. Positions 278-293 (NPSAVPSPETQNLSQS) are enriched in polar residues. Positions 278–318 (NPSAVPSPETQNLSQSTEEEEAARSLDDDKEDVMAPPPLQM) are disordered.

The protein belongs to the CD300 family. Post-translationally, O-glycosylated with sialylated oligosaccharides. Expressed in monocyte cell lines. Expressed in certain types of endothelial and myeloid lineage cells. Expressed in mesenteric lymph nodes (LNs), spleen, thymus, lung, heart and kidney. Expressed in high endothelial venules (HEVs) in peripheral and mesenteric LNs (at protein level). Highly expressed in heart. Slightly expressed in spleen and thymus. Isoform 5 is expressed preferentially in heart. Isoform 1 is expressed predominantly in kidney and liver.

The protein localises to the apical cell membrane. Its subcellular location is the basolateral cell membrane. The protein resides in the endosome. It localises to the multivesicular body membrane. Receptor which may mediate L-selectin-dependent lymphocyte rollings. Binds SELL in a calcium dependent manner. Binds lymphocyte. This is CMRF35-like molecule 9 (Cd300lg) from Mus musculus (Mouse).